Here is a 383-residue protein sequence, read N- to C-terminus: UDP-N-acetylglucosamine--N-acetylmuramyl-(pentapeptide) pyrophosphoryl-undecaprenol N-acetylglucosamine transferase (383 aa).

UDP-N-acetyl-alpha-D-glucosamine is bound by residues 10–12 (TGG), N124, R165, S190, I245, and Q290. Residues 363–383 (SPFGQAREPGQKPARPPDPAS) are disordered.

It belongs to the glycosyltransferase 28 family. MurG subfamily.

It localises to the cell inner membrane. The catalysed reaction is di-trans,octa-cis-undecaprenyl diphospho-N-acetyl-alpha-D-muramoyl-L-alanyl-D-glutamyl-meso-2,6-diaminopimeloyl-D-alanyl-D-alanine + UDP-N-acetyl-alpha-D-glucosamine = di-trans,octa-cis-undecaprenyl diphospho-[N-acetyl-alpha-D-glucosaminyl-(1-&gt;4)]-N-acetyl-alpha-D-muramoyl-L-alanyl-D-glutamyl-meso-2,6-diaminopimeloyl-D-alanyl-D-alanine + UDP + H(+). It functions in the pathway cell wall biogenesis; peptidoglycan biosynthesis. Its function is as follows. Cell wall formation. Catalyzes the transfer of a GlcNAc subunit on undecaprenyl-pyrophosphoryl-MurNAc-pentapeptide (lipid intermediate I) to form undecaprenyl-pyrophosphoryl-MurNAc-(pentapeptide)GlcNAc (lipid intermediate II). This is UDP-N-acetylglucosamine--N-acetylmuramyl-(pentapeptide) pyrophosphoryl-undecaprenol N-acetylglucosamine transferase from Anaeromyxobacter dehalogenans (strain 2CP-1 / ATCC BAA-258).